Consider the following 155-residue polypeptide: Small ribosomal subunit protein uS7cz/uS7cy (155 aa).

In terms of assembly, component of the chloroplast small ribosomal subunit (SSU). Mature 70S chloroplast ribosomes of higher plants consist of a small (30S) and a large (50S) subunit. The 30S small subunit contains 1 molecule of ribosomal RNA (16S rRNA) and 24 different proteins. The 50S large subunit contains 3 rRNA molecules (23S, 5S and 4.5S rRNA) and 33 different proteins.

It localises to the plastid. The protein resides in the chloroplast. Component of the chloroplast ribosome (chloro-ribosome), a dedicated translation machinery responsible for the synthesis of chloroplast genome-encoded proteins, including proteins of the transcription and translation machinery and components of the photosynthetic apparatus. This Spinacia oleracea (Spinach) protein is Small ribosomal subunit protein uS7cz/uS7cy (rps7-A).